A 134-amino-acid polypeptide reads, in one-letter code: Small ribosomal subunit protein uS9 (134 aa).

Positions 98 to 114 (SKQELKSHGFLTRDPRK) are enriched in basic and acidic residues. The interval 98–134 (SKQELKSHGFLTRDPRKKERKKYGHKKARKSFQFSKR) is disordered. Residues 115–134 (KERKKYGHKKARKSFQFSKR) show a composition bias toward basic residues.

It belongs to the universal ribosomal protein uS9 family.

The sequence is that of Small ribosomal subunit protein uS9 from Chlamydia caviae (strain ATCC VR-813 / DSM 19441 / 03DC25 / GPIC) (Chlamydophila caviae).